The primary structure comprises 154 residues: Prefoldin subunit alpha (154 aa).

Residues 92 to 102 (DNAVESLSTKQ) are compositionally biased toward polar residues. Residues 92 to 154 (DNAVESLSTK…MQDQQPEDNE (63 aa)) are disordered. Over residues 103–114 (DALDNRIESLRD) the composition is skewed to basic and acidic residues. The segment covering 128–148 (QQAQQMQQQMQQQQMQQMQDQ) has biased composition (low complexity).

It belongs to the prefoldin subunit alpha family. In terms of assembly, heterohexamer of two alpha and four beta subunits.

Its subcellular location is the cytoplasm. In terms of biological role, molecular chaperone capable of stabilizing a range of proteins. Seems to fulfill an ATP-independent, HSP70-like function in archaeal de novo protein folding. This Haloquadratum walsbyi (strain DSM 16790 / HBSQ001) protein is Prefoldin subunit alpha.